The chain runs to 178 residues: Large ribosomal subunit protein uL10 (178 aa).

The protein belongs to the universal ribosomal protein uL10 family. As to quaternary structure, part of the ribosomal stalk of the 50S ribosomal subunit. The N-terminus interacts with L11 and the large rRNA to form the base of the stalk. The C-terminus forms an elongated spine to which L12 dimers bind in a sequential fashion forming a multimeric L10(L12)X complex.

Forms part of the ribosomal stalk, playing a central role in the interaction of the ribosome with GTP-bound translation factors. The sequence is that of Large ribosomal subunit protein uL10 from Dictyoglomus thermophilum (strain ATCC 35947 / DSM 3960 / H-6-12).